Consider the following 319-residue polypeptide: Pantothenate kinase (319 aa).

Position 96–103 (96–103) interacts with ATP; that stretch reads GSVAVGKS.

This sequence belongs to the prokaryotic pantothenate kinase family.

The protein localises to the cytoplasm. The enzyme catalyses (R)-pantothenate + ATP = (R)-4'-phosphopantothenate + ADP + H(+). It participates in cofactor biosynthesis; coenzyme A biosynthesis; CoA from (R)-pantothenate: step 1/5. This Bacillus subtilis (strain 168) protein is Pantothenate kinase (coaA).